The chain runs to 344 residues: Protein Tob2 (344 aa).

2 disordered regions span residues 144–169 (GSQD…FIPR) and 191–225 (MKKG…SPTN). The span at 145–164 (SQDSSLSNSPSPSFGQSPSP) shows a compositional bias: low complexity. Over residues 194–210 (GGGAASGGGVASSGAGG) the composition is skewed to gly residues. Over residues 211-225 (QQPPQQPRMARSPTN) the composition is skewed to low complexity. A Phosphoserine modification is found at Ser-254.

The protein belongs to the BTG family. As to quaternary structure, associates with CAF1. In terms of tissue distribution, ubiquitous.

Its subcellular location is the cytoplasm. Anti-proliferative protein inhibits cell cycle progression from the G0/G1 to S phases. This is Protein Tob2 (TOB2) from Homo sapiens (Human).